A 290-amino-acid polypeptide reads, in one-letter code: Lipoyl synthase (290 aa).

Positions 38, 43, 49, 64, 68, 71, and 277 each coordinate [4Fe-4S] cluster. In terms of domain architecture, Radical SAM core spans 50–266 (WSKGTATFLL…REIALDAGFR (217 aa)).

It belongs to the radical SAM superfamily. Lipoyl synthase family. It depends on [4Fe-4S] cluster as a cofactor.

Its subcellular location is the cytoplasm. The enzyme catalyses [[Fe-S] cluster scaffold protein carrying a second [4Fe-4S](2+) cluster] + N(6)-octanoyl-L-lysyl-[protein] + 2 oxidized [2Fe-2S]-[ferredoxin] + 2 S-adenosyl-L-methionine + 4 H(+) = [[Fe-S] cluster scaffold protein] + N(6)-[(R)-dihydrolipoyl]-L-lysyl-[protein] + 4 Fe(3+) + 2 hydrogen sulfide + 2 5'-deoxyadenosine + 2 L-methionine + 2 reduced [2Fe-2S]-[ferredoxin]. It functions in the pathway protein modification; protein lipoylation via endogenous pathway; protein N(6)-(lipoyl)lysine from octanoyl-[acyl-carrier-protein]: step 2/2. Functionally, catalyzes the radical-mediated insertion of two sulfur atoms into the C-6 and C-8 positions of the octanoyl moiety bound to the lipoyl domains of lipoate-dependent enzymes, thereby converting the octanoylated domains into lipoylated derivatives. The chain is Lipoyl synthase from Chlorobaculum tepidum (strain ATCC 49652 / DSM 12025 / NBRC 103806 / TLS) (Chlorobium tepidum).